The chain runs to 148 residues: 3-dehydroquinate dehydratase (148 aa).

The active-site Proton acceptor is Tyr-23. Residues Asn-75, His-81, and Asp-88 each contribute to the substrate site. The active-site Proton donor is the His-101. Substrate is bound by residues Leu-102 to Ser-103 and Arg-112.

This sequence belongs to the type-II 3-dehydroquinase family. Homododecamer.

The enzyme catalyses 3-dehydroquinate = 3-dehydroshikimate + H2O. It functions in the pathway metabolic intermediate biosynthesis; chorismate biosynthesis; chorismate from D-erythrose 4-phosphate and phosphoenolpyruvate: step 3/7. In terms of biological role, catalyzes a trans-dehydration via an enolate intermediate. This Cellvibrio japonicus (strain Ueda107) (Pseudomonas fluorescens subsp. cellulosa) protein is 3-dehydroquinate dehydratase.